We begin with the raw amino-acid sequence, 235 residues long: MINPVYVAIDTTEAARAIALAERLKGQVGGFKLGLEYFTANGPAGMEAVSGLGMPLFVDLKLHDIPNTVAAAMKGVVRLGAAITTIHASGGAAMIRAAVDAANDEAAKLGIAPPAVVAVTVLTSLDQAGAEQVGFERPVLDQVKRLATLAQDSGAAGIVCSPLEVEAVRALCGPDFKLVIPGIRPAWSEAGDQKRFLTPAEARAKGADVLVIGRPITAAADPAEAAGRIKAELGL.

Substrate-binding positions include Asp10, Lys32, 59–68, Thr123, Arg184, Gln193, Gly213, and Arg214; that span reads DLKLHDIPNT. Lys61 serves as the catalytic Proton donor.

The protein belongs to the OMP decarboxylase family. Type 1 subfamily. In terms of assembly, homodimer.

It carries out the reaction orotidine 5'-phosphate + H(+) = UMP + CO2. It functions in the pathway pyrimidine metabolism; UMP biosynthesis via de novo pathway; UMP from orotate: step 2/2. Its function is as follows. Catalyzes the decarboxylation of orotidine 5'-monophosphate (OMP) to uridine 5'-monophosphate (UMP). This is Orotidine 5'-phosphate decarboxylase from Paramagnetospirillum magneticum (strain ATCC 700264 / AMB-1) (Magnetospirillum magneticum).